The sequence spans 304 residues: E3 ubiquitin-protein ligase BOI (304 aa).

Residues Leu178–Leu214 are WRD domain. Residues Gln197–Phe220 adopt a coiled-coil conformation. The segment at Cys254–Asp291 adopts an RING-type zinc-finger fold.

As to quaternary structure, interacts with MYB108/BOS1 and the DELLA proteins GAI, RGA, RGL1, RGL2 and RGL3. Expressed in leaves, siliques, roots, flowering tissues and stigma tips.

Its subcellular location is the nucleus. The catalysed reaction is S-ubiquitinyl-[E2 ubiquitin-conjugating enzyme]-L-cysteine + [acceptor protein]-L-lysine = [E2 ubiquitin-conjugating enzyme]-L-cysteine + N(6)-ubiquitinyl-[acceptor protein]-L-lysine.. Its pathway is protein degradation; proteasomal ubiquitin-dependent pathway. Its function is as follows. E3 ubiquitin-protein ligase involved in the regulation of pathogen and abiotic stress responses by facilitating degradation of MYB108/BOI. Attenuates cell death by preventing caspase activation. Has no effect on the stability of the DELLA proteins. Not regulated by MYB108/BOI. In Arabidopsis thaliana (Mouse-ear cress), this protein is E3 ubiquitin-protein ligase BOI (BOI).